A 109-amino-acid chain; its full sequence is Aquaporin-2 (109 aa).

The Cytoplasmic portion of the chain corresponds to 1 to 6 (SIAFSR). Residues 7 to 27 (AVFTEFLATLLFVFFGLGSAL) form a helical membrane-spanning segment. Topologically, residues 28 to 35 (NWPQALPS) are extracellular. The helical transmembrane segment at 36-54 (VLQIAMAFGLAIGTLVQML) threads the bilayer. Residues 55-59 (GHISG) lie on the Cytoplasmic side of the membrane. The discontinuously helical intramembrane region spans 60–69 (AHINPAVTVA). Residues 63-65 (NPA) carry the NPA 1 motif. The Cytoplasmic segment spans residues 70–80 (CLVGCHISFLR). A helical membrane pass occupies residues 81–102 (AAFYVAAQLLGAVAGAALLHEV). Over 103–109 (TPPSIRG) the chain is Extracellular.

The protein belongs to the MIP/aquaporin (TC 1.A.8) family. In terms of assembly, homotetramer. Post-translationally, serine phosphorylation is necessary and sufficient for expression at the apical membrane. Endocytosis is not phosphorylation-dependent. In terms of processing, N-glycosylated.

It is found in the apical cell membrane. The protein resides in the basolateral cell membrane. It localises to the cell membrane. Its subcellular location is the cytoplasmic vesicle membrane. The protein localises to the golgi apparatus. It is found in the trans-Golgi network membrane. The catalysed reaction is H2O(in) = H2O(out). It catalyses the reaction glycerol(in) = glycerol(out). In terms of biological role, forms a water-specific channel that provides the plasma membranes of renal collecting duct with high permeability to water, thereby permitting water to move in the direction of an osmotic gradient. Plays an essential role in renal water homeostasis. Could also be permeable to glycerol. The polypeptide is Aquaporin-2 (Erinaceus europaeus (Western European hedgehog)).